A 111-amino-acid chain; its full sequence is Large ribosomal subunit protein uL22 (111 aa).

Belongs to the universal ribosomal protein uL22 family. Part of the 50S ribosomal subunit.

This protein binds specifically to 23S rRNA; its binding is stimulated by other ribosomal proteins, e.g. L4, L17, and L20. It is important during the early stages of 50S assembly. It makes multiple contacts with different domains of the 23S rRNA in the assembled 50S subunit and ribosome. Functionally, the globular domain of the protein is located near the polypeptide exit tunnel on the outside of the subunit, while an extended beta-hairpin is found that lines the wall of the exit tunnel in the center of the 70S ribosome. This chain is Large ribosomal subunit protein uL22, found in Geobacter sulfurreducens (strain ATCC 51573 / DSM 12127 / PCA).